Reading from the N-terminus, the 40-residue chain is SDGRNTAANDKASNLMALRDDCCPNPPCKASNPDLCDWRS.

Positions 1-19 (SDGRNTAANDKASNLMALR) are excised as a propeptide. 2 disulfide bridges follow: Cys22–Cys28 and Cys23–Cys36. The tract at residues 24–26 (PNP) is lacks the Ser-Xaa-Pro motif that is crucial for potent interaction with nAChR.

The protein belongs to the conotoxin A superfamily. In terms of tissue distribution, expressed by the venom duct.

Its subcellular location is the secreted. Functionally, alpha-conotoxins act on postsynaptic membranes, they bind to the nicotinic acetylcholine receptors (nAChR) and thus inhibit them. Has possibly a distinct nAChR binding mode from other alpha-conotoxins, due to a different three residue motif (lacks the Ser-Xaa-Pro motif). The chain is Alpha-conotoxin-like Qc1.1c from Conus quercinus (Oak cone).